We begin with the raw amino-acid sequence, 352 residues long: Inorganic triphosphatase (352 aa).

The CYTH domain maps to 6 to 203; the sequence is LQEIELKLAI…KRGYLLGSKQ (198 aa).

The catalysed reaction is triphosphate + H2O = phosphate + diphosphate. Its function is as follows. Involved in the hydrolysis of the beta-gamma-phosphoanhydride linkage of triphosphate-containing substrates (inorganic or nucleoside-linked). Catalyzes the hydrolysis of inorganic triphosphate (PPPi), which could be cytotoxic because of its high affinity for calcium ion, thereby interfering with calcium signaling. The polypeptide is Inorganic triphosphatase (Haemophilus influenzae (strain ATCC 51907 / DSM 11121 / KW20 / Rd)).